We begin with the raw amino-acid sequence, 325 residues long: GMP reductase (325 aa).

Cys174 functions as the Thioimidate intermediate in the catalytic mechanism. 203–226 (IIADGGIRTHGDIAKSIRFGATMV) contacts NADP(+).

Belongs to the IMPDH/GMPR family. GuaC type 2 subfamily.

It catalyses the reaction IMP + NH4(+) + NADP(+) = GMP + NADPH + 2 H(+). Catalyzes the irreversible NADPH-dependent deamination of GMP to IMP. It functions in the conversion of nucleobase, nucleoside and nucleotide derivatives of G to A nucleotides, and in maintaining the intracellular balance of A and G nucleotides. The protein is GMP reductase of Helicobacter pylori (strain J99 / ATCC 700824) (Campylobacter pylori J99).